The following is a 348-amino-acid chain: Anthranilate phosphoribosyltransferase (348 aa).

Residues G87, 90-91 (GD), T95, 97-100 (NIST), 115-123 (KHGNRSASG), and S127 contribute to the 5-phospho-alpha-D-ribose 1-diphosphate site. G87 contributes to the anthranilate binding site. S99 contributes to the Mg(2+) binding site. Position 118 (N118) interacts with anthranilate. Residue R173 participates in anthranilate binding. Mg(2+) is bound by residues D232 and E233.

Belongs to the anthranilate phosphoribosyltransferase family. As to quaternary structure, homodimer. It depends on Mg(2+) as a cofactor.

It catalyses the reaction N-(5-phospho-beta-D-ribosyl)anthranilate + diphosphate = 5-phospho-alpha-D-ribose 1-diphosphate + anthranilate. It participates in amino-acid biosynthesis; L-tryptophan biosynthesis; L-tryptophan from chorismate: step 2/5. In terms of biological role, catalyzes the transfer of the phosphoribosyl group of 5-phosphorylribose-1-pyrophosphate (PRPP) to anthranilate to yield N-(5'-phosphoribosyl)-anthranilate (PRA). This chain is Anthranilate phosphoribosyltransferase, found in Synechococcus sp. (strain CC9311).